We begin with the raw amino-acid sequence, 711 residues long: Amino-acid racemase (711 aa).

Over 1-14 (MTKNESYSGIDYFR) the chain is Cytoplasmic. Residues 15-35 (FIAALLIVAIHTSPLFSFSET) traverse the membrane as a helical segment. Over 36-37 (GN) the chain is Extracellular. The chain crosses the membrane as a helical span at residues 38–58 (FIFTRIVAPVAVPFFFMTSGF). Over 59 to 78 (FLISRYTCNAEKLGAFIKKT) the chain is Cytoplasmic. A helical membrane pass occupies residues 79–99 (TLIYGVAILLYIPINVYNGYF). At 100–117 (KMDNLLPNIIKDIVFDGT) the chain is on the extracellular side. Residues 118–138 (LYHLWYLPASIIGAAIAWYLV) form a helical membrane-spanning segment. Topologically, residues 139-146 (KKVHYRKA) are cytoplasmic. A helical transmembrane segment spans residues 147–167 (FLIASILYIIGLFGDSYYGIV). At 168 to 188 (KSVSCLNVFYNLIFQLTDYTR) the chain is on the extracellular side. The chain crosses the membrane as a helical span at residues 189–209 (NGIFFAPIFFVLGGYISDSPN). The Cytoplasmic segment spans residues 210 to 241 (RYRKKNYIRIYSLFCLMFGKTLTLQHFDIQKH). The chain crosses the membrane as a helical span at residues 242–262 (DSMYVLLLPSVWCLFNLLLHF). At 263 to 306 (RGKRRTGLRTISLDQLYHSSVYDCCNTIVCAELLHLQSLLVENS) the chain is on the extracellular side. A helical membrane pass occupies residues 307–327 (LVHYIAVCFASVVLAVVITAL). Residues 328-711 (LSSLKPKKAK…EHRLNIIRRA (384 aa)) lie on the Cytoplasmic side of the membrane. Residues 336–711 (AKHTADTDRA…EHRLNIIRRA (376 aa)) are racemase. The active-site Proton acceptor is the K376. Position 376 is an N6-(pyridoxal phosphate)lysine (K376). R470 provides a ligand contact to substrate. The active-site Proton acceptor is Y602. M651 serves as a coordination point for substrate.

The protein in the N-terminal section; belongs to the acyltransferase 3 family. In the C-terminal section; belongs to the alanine racemase family. The cofactor is pyridoxal 5'-phosphate.

It localises to the cell membrane. The chain is Amino-acid racemase (vanTG) from Enterococcus faecalis (Streptococcus faecalis).